The following is a 105-amino-acid chain: UPF0148 protein PH0795 (105 aa).

This sequence belongs to the UPF0148 family.

The sequence is that of UPF0148 protein PH0795 from Pyrococcus horikoshii (strain ATCC 700860 / DSM 12428 / JCM 9974 / NBRC 100139 / OT-3).